Here is a 488-residue protein sequence, read N- to C-terminus: Probable 26S proteasome non-ATPase regulatory subunit 3 (488 aa).

The interval 1-20 is disordered; the sequence is MTQDVEMKEQAAPPSNSLSS. The 182-residue stretch at 240–421 folds into the PCI domain; it reads SRYLFYLGKI…GWMVSKETGD (182 aa). The interval 452–488 is disordered; it reads FPPNSHKEKESAEKRRERQQQEQELAKHIAEEDDDDF. The span at 456 to 481 shows a compositional bias: basic and acidic residues; it reads SHKEKESAEKRRERQQQEQELAKHIA.

This sequence belongs to the proteasome subunit S3 family. The 26S proteasome is composed of a core protease, known as the 20S proteasome, capped at one or both ends by the 19S regulatory complex (RC). The RC is composed of at least 18 different subunits in two subcomplexes, the base and the lid, which form the portions proximal and distal to the 20S proteolytic core, respectively.

It localises to the nucleus. In terms of biological role, acts as a regulatory subunit of the 26 proteasome which is involved in the ATP-dependent degradation of ubiquitinated proteins. In Nicotiana tabacum (Common tobacco), this protein is Probable 26S proteasome non-ATPase regulatory subunit 3 (21D7).